An 843-amino-acid polypeptide reads, in one-letter code: Protein P (843 aa).

The terminal protein domain (TP) stretch occupies residues 1 to 177 (MPLSYQHFRR…FCGSPYSWEQ (177 aa)). Residues 178 to 346 (ELQHGSTSLN…YCLSHIINLL (169 aa)) form a spacer region. Positions 249–301 (TPTRWPSGVEPSGTGHSDNLATRSTSRFHQSEVRKETNPSLSTSKGHTSTGHA) are disordered. Composition is skewed to polar residues over residues 262 to 276 (TGHS…TSRF) and 286 to 299 (NPSL…TSTG). Residues 347 to 690 (EDWGPCYEHG…YMNLYPVARQ (344 aa)) are polymerase/reverse transcriptase domain (RT). Residues 357-600 (EHHIRTPRTP…YSLHFMGYII (244 aa)) enclose the Reverse transcriptase domain. Positions 429, 551, and 552 each coordinate Mg(2+).

Belongs to the hepadnaviridae P protein family.

The catalysed reaction is DNA(n) + a 2'-deoxyribonucleoside 5'-triphosphate = DNA(n+1) + diphosphate. It carries out the reaction Endonucleolytic cleavage to 5'-phosphomonoester.. Its activity is regulated as follows. Activated by host HSP70 and HSP40 in vitro to be able to bind the epsilon loop of the pgRNA. Because deletion of the RNase H region renders the protein partly chaperone-independent, the chaperones may be needed indirectly to relieve occlusion of the RNA-binding site by this domain. Inhibited by several reverse-transcriptase inhibitors: Lamivudine, Adefovir and Entecavir. Functionally, multifunctional enzyme that converts the viral RNA genome into dsDNA in viral cytoplasmic capsids. This enzyme displays a DNA polymerase activity that can copy either DNA or RNA templates, and a ribonuclease H (RNase H) activity that cleaves the RNA strand of RNA-DNA heteroduplexes in a partially processive 3'- to 5'-endonucleasic mode. Neo-synthesized pregenomic RNA (pgRNA) are encapsidated together with the P protein, and reverse-transcribed inside the nucleocapsid. Initiation of reverse-transcription occurs first by binding the epsilon loop on the pgRNA genome, and is initiated by protein priming, thereby the 5'-end of (-)DNA is covalently linked to P protein. Partial (+)DNA is synthesized from the (-)DNA template and generates the relaxed circular DNA (RC-DNA) genome. After budding and infection, the RC-DNA migrates in the nucleus, and is converted into a plasmid-like covalently closed circular DNA (cccDNA). The activity of P protein does not seem to be necessary for cccDNA generation, and is presumably released from (+)DNA by host nuclear DNA repair machinery. In Homo sapiens (Human), this protein is Protein P.